Here is a 165-residue protein sequence, read N- to C-terminus: uncharacterized protein (165 aa).

Positions 8–159 constitute an N-acetyltransferase domain; the sequence is LLVNYKTLEE…QGVQEQTTKP (152 aa).

This is an uncharacterized protein from Shouchella clausii (strain KSM-K16) (Alkalihalobacillus clausii).